The following is a 379-amino-acid chain: DNA replication and repair protein RecF (379 aa).

30–37 (GDNAQGKS) contributes to the ATP binding site.

This sequence belongs to the RecF family.

It localises to the cytoplasm. In terms of biological role, the RecF protein is involved in DNA metabolism; it is required for DNA replication and normal SOS inducibility. RecF binds preferentially to single-stranded, linear DNA. It also seems to bind ATP. This Thermosynechococcus vestitus (strain NIES-2133 / IAM M-273 / BP-1) protein is DNA replication and repair protein RecF.